A 66-amino-acid chain; its full sequence is Large ribosomal subunit protein bL33c (66 aa).

This sequence belongs to the bacterial ribosomal protein bL33 family.

It localises to the plastid. It is found in the chloroplast. This Angiopteris evecta (Mule's foot fern) protein is Large ribosomal subunit protein bL33c.